Reading from the N-terminus, the 302-residue chain is Meiotically up-regulated gene 129 protein (302 aa).

Has a role in meiosis. The sequence is that of Meiotically up-regulated gene 129 protein (mug129) from Schizosaccharomyces pombe (strain 972 / ATCC 24843) (Fission yeast).